We begin with the raw amino-acid sequence, 633 residues long: MTAVLFLCFLLICFSFTPSLQNVSESEPLVRFKRSVNITKGDLNSWRTGTDPCNGKWFGIYCQKGQTVSGIHVTRLGLSGTINIEDLKDLPNLRTIRLDNNLLSGPLPPFFKLPGLKSLLLSNNSFSGEIADDFFKETPQLKRVFLDNNRLSGKIPASLMQLAGLEELHMQGNQFTGEIPPLTDGNKVLKSLDLSNNDLEGEIPITISDRKNLEMKFEGNQRLCGSPLNIECDEKPSSTGSGNEKNNTAKAIFMVILFLLIFLFVVAIITRWKKKRQPEFRMLGKDHLSDQESVEVRVPDSIKKPIDSSKKRSNAEGSSKKGSSHNGKGAGGGPGSGMGDIIMVNSEKGSFGLPDLMKAAAEVLGNGSLGSAYKAVMANGLSVVVKRIRDMNKLAREAFDTEMQRFGKLRHPNVLTPLAYHYRREEKLVVSEYMPKSSLLYVLHGDRGVYHSELTWATRLKIIQGVARGMDFLHEEFASYDLPHGNLKSSNVLLSETYEPLISDYAFLPLLQPNNASQALFAFKSPEFVQNQQVSPKSDVYCLGIIVLEVMTGKFPSQYLNTGKGGTDIVEWVQSSIAQHKEEELIDPEIASNTDSIKQMVELLRIGAACIASNPNERQNMKEIVRRIERVTL.

The first 19 residues, 1-19 (MTAVLFLCFLLICFSFTPS), serve as a signal peptide directing secretion. N-linked (GlcNAc...) asparagine glycans are attached at residues N22 and N37. An intrachain disulfide couples C53 to C62. LRR repeat units follow at residues 90–115 (LPNL…KLPG), 117–137 (KSLL…FFKE), 138–162 (TPQL…LMQL), 163–186 (AGLE…TDGN), and 188–210 (VLKS…ISDR). An N-linked (GlcNAc...) asparagine glycan is attached at N123. C224 and C232 form a disulfide bridge. N246 is a glycosylation site (N-linked (GlcNAc...) asparagine). A helical transmembrane segment spans residues 249–269 (AKAIFMVILFLLIFLFVVAII). A compositionally biased stretch (basic and acidic residues) spans 294–314 (VEVRVPDSIKKPIDSSKKRSN). A disordered region spans residues 294 to 339 (VEVRVPDSIKKPIDSSKKRSNAEGSSKKGSSHNGKGAGGGPGSGMG). Over residues 328–338 (KGAGGGPGSGM) the composition is skewed to gly residues. The region spanning 358-633 (KAAAEVLGNG…IVRRIERVTL (276 aa)) is the Protein kinase domain. ATP contacts are provided by residues 364–372 (LGNGSLGSA) and K386. At S438 the chain carries Phosphoserine. T458 is modified (phosphothreonine). Residue S535 is modified to Phosphoserine.

The protein belongs to the protein kinase superfamily. Ser/Thr protein kinase family. In terms of assembly, interacts in vitro with ROPGEF1 (via PRONE domain). Interacts with PRK6. Expressed in pollen and/or in flowers, but not in leaves.

The protein localises to the membrane. It catalyses the reaction L-seryl-[protein] + ATP = O-phospho-L-seryl-[protein] + ADP + H(+). The catalysed reaction is L-threonyl-[protein] + ATP = O-phospho-L-threonyl-[protein] + ADP + H(+). With respect to regulation, the phosphorylation activity is calcium-independent. Functionally, receptor-like kinase involved in the control of pollen germination and pollen tube polar growth. Can phosphorylate ROPGEF1 in vitro. In Arabidopsis thaliana (Mouse-ear cress), this protein is Pollen receptor-like kinase 3.